Consider the following 57-residue polypeptide: Neurotoxin Oh9-1 (57 aa).

Disulfide bonds link Cys3/Cys19, Cys12/Cys37, Cys41/Cys49, and Cys50/Cys55.

It belongs to the three-finger toxin family. Short-chain subfamily. Expressed by the venom gland.

The protein resides in the secreted. This toxin binds and inhibits rat muscle adult alpha-1-beta-1-delta-epsilon/CHRNA1-CHRNB1-CHRND-CHRNE (IC(50)=3.1 uM) and fetal alpha-1-beta-1-gamma-delta/CHRNA1-CHRNB1-CHRNG-CHRND (IC(50)=5.6 uM) nicotinic acetylcholine receptors (nAChR). Shows a very low inhibition on rat neuronal alpha-3-beta-2/CHRNA3-CHRNB2 nAChR (IC(50)=50.2 uM) nAChR. Binds to the acetylcholine-binding pocket and acts as a competitive antagonist. Does not inhibit human glycine receptor (homopentamer composed of alpha-1 subunits, GLRA1), but seems to potentiate it (about 2-fold increased activity). The chain is Neurotoxin Oh9-1 from Ophiophagus hannah (King cobra).